Reading from the N-terminus, the 156-residue chain is Riboflavin synthase (156 aa).

It belongs to the DMRL synthase family.

It catalyses the reaction 2 6,7-dimethyl-8-(1-D-ribityl)lumazine + H(+) = 5-amino-6-(D-ribitylamino)uracil + riboflavin. The protein operates within cofactor biosynthesis; riboflavin biosynthesis; riboflavin from 2-hydroxy-3-oxobutyl phosphate and 5-amino-6-(D-ribitylamino)uracil: step 2/2. This is Riboflavin synthase (ribC) from Methanocaldococcus jannaschii (strain ATCC 43067 / DSM 2661 / JAL-1 / JCM 10045 / NBRC 100440) (Methanococcus jannaschii).